The primary structure comprises 459 residues: Elongation factor 1-alpha 4 (459 aa).

In terms of domain architecture, tr-type G spans 5 to 242 (KTHINIVVIG…DCIIPPQRPT (238 aa)). Positions 14–21 (GHVDSGKS) are G1. The segment at 70–74 (GITID) is G2. Residues 91 to 94 (DAPG) are G3. The segment at 153-156 (NKMD) is G4. Residues 194 to 196 (SGF) form a G5 region. Residues E301 and E374 each carry the 5-glutamyl glycerylphosphorylethanolamine modification.

The protein belongs to the TRAFAC class translation factor GTPase superfamily. Classic translation factor GTPase family. EF-Tu/EF-1A subfamily.

The protein localises to the cytoplasm. Functionally, this protein promotes the GTP-dependent binding of aminoacyl-tRNA to the A-site of ribosomes during protein biosynthesis. The sequence is that of Elongation factor 1-alpha 4 (eft-4) from Oscheius tipulae.